We begin with the raw amino-acid sequence, 415 residues long: Arrestin domain-containing protein 4 (415 aa).

2 short sequence motifs (PPxY motif) span residues 347–350 (PPNY) and 392–395 (PPLY).

This sequence belongs to the arrestin family. Interacts with ADRB2. Interacts (via PPxY motifs) with ITCH, NEDD4L and WWP2. Interacts with AVPR2. Identified in a complex containing at least ARRDC4, AVPR2 and HGS. Interacts with SLC11A2; controls the incorporation of SLC11A2 into extracellular vesicles through an ubiquitination-dependent mechanism. Interacts with TRIM65.

The protein localises to the early endosome. Its subcellular location is the cell membrane. It localises to the cytoplasmic vesicle. Functions as an adapter recruiting ubiquitin-protein ligases to their specific substrates. Plays a role in endocytosis of activated G protein-coupled receptors (GPCRs). Through an ubiquitination-dependent mechanism also plays a role in the incorporation of SLC11A2 into extracellular vesicles. May play a role in glucose uptake. Participates in innate immune response by promoting IFIH1/MDA5 activation through interaction with TRIM65. This Mus musculus (Mouse) protein is Arrestin domain-containing protein 4.